The sequence spans 110 residues: Phosphoribosyl-ATP pyrophosphatase (110 aa).

The protein belongs to the PRA-PH family.

It localises to the cytoplasm. The catalysed reaction is 1-(5-phospho-beta-D-ribosyl)-ATP + H2O = 1-(5-phospho-beta-D-ribosyl)-5'-AMP + diphosphate + H(+). It participates in amino-acid biosynthesis; L-histidine biosynthesis; L-histidine from 5-phospho-alpha-D-ribose 1-diphosphate: step 2/9. In Lacticaseibacillus casei (strain BL23) (Lactobacillus casei), this protein is Phosphoribosyl-ATP pyrophosphatase.